A 538-amino-acid polypeptide reads, in one-letter code: Growth factor receptor-bound protein 14 (538 aa).

The disordered stretch occupies residues 1–20 (MTTSLQDGQSAAGRAGAQDS). Thr2 carries the N-acetylthreonine modification. Residues 104-190 (KKQVIKVYSE…NKLYLRKNYA (87 aa)) form the Ras-associating domain. The region spanning 232 to 340 (YPEIHGFLHA…WVTAIRLLKD (109 aa)) is the PH domain. Residues Ser370 and Ser373 each carry the phosphoserine modification. Positions 437–533 (WFHHRISRDE…VLPCKLKHYC (97 aa)) constitute an SH2 domain.

It belongs to the GRB7/10/14 family. In terms of assembly, interacts with the cytoplasmic domain of the autophosphorylated insulin receptor, through the SH2 domain. Interacts with GRB14 (via BPS domain); this interaction protects the tyrosines in the activation loop on INSR from dephosphorylation. Binds to the ankyrin repeat region of TNKS2 via its N-terminus. Interacts with activated NRAS. Interacts (via SH2 domain) with TEK/TIE2 (tyrosine phosphorylated). Phosphorylated on serine residues. Phosphorylated on tyrosine residues by TEK/TIE2.

Its subcellular location is the cytoplasm. The protein resides in the endosome membrane. Functionally, adapter protein which modulates coupling of cell surface receptor kinases with specific signaling pathways. Binds to, and suppresses signals from, the activated insulin receptor (INSR). Potent inhibitor of insulin-stimulated MAPK3 phosphorylation. Plays a critical role regulating PDPK1 membrane translocation in response to insulin stimulation and serves as an adapter protein to recruit PDPK1 to activated insulin receptor, thus promoting PKB/AKT1 phosphorylation and transduction of the insulin signal. This chain is Growth factor receptor-bound protein 14 (Grb14), found in Mus musculus (Mouse).